Consider the following 630-residue polypeptide: 1-deoxy-D-xylulose-5-phosphate synthase (630 aa).

Thiamine diphosphate-binding positions include histidine 75 and glycine 116–serine 118. Aspartate 147 provides a ligand contact to Mg(2+). Thiamine diphosphate-binding positions include glycine 148–alanine 149, asparagine 176, tyrosine 287, and glutamate 367. Asparagine 176 contributes to the Mg(2+) binding site.

Belongs to the transketolase family. DXPS subfamily. Homodimer. It depends on Mg(2+) as a cofactor. Requires thiamine diphosphate as cofactor.

The enzyme catalyses D-glyceraldehyde 3-phosphate + pyruvate + H(+) = 1-deoxy-D-xylulose 5-phosphate + CO2. Its pathway is metabolic intermediate biosynthesis; 1-deoxy-D-xylulose 5-phosphate biosynthesis; 1-deoxy-D-xylulose 5-phosphate from D-glyceraldehyde 3-phosphate and pyruvate: step 1/1. Its function is as follows. Catalyzes the acyloin condensation reaction between C atoms 2 and 3 of pyruvate and glyceraldehyde 3-phosphate to yield 1-deoxy-D-xylulose-5-phosphate (DXP). In Treponema pallidum (strain Nichols), this protein is 1-deoxy-D-xylulose-5-phosphate synthase.